Here is a 1377-residue protein sequence, read N- to C-terminus: Neogenin (1377 aa).

The first 2 residues, 1–2 (AA), serve as a signal peptide directing secretion. The Extracellular portion of the chain corresponds to 3–1074 (AKNGSPPQSA…PTSPLDSNML (1072 aa)). Ig-like C2-type domains lie at 21–114 (PLYF…RTAK), 121–206 (PRFT…EAEL), 198–305 (PKFS…AELT), and 310–395 (PEFL…AQLI). N-linked (GlcNAc...) asparagine glycosylation occurs at N42. Disulfide bonds link C43-C98, C142-C190, and C239-C289. An N-linked (GlcNAc...) asparagine glycan is attached at N179. The N-linked (GlcNAc...) asparagine glycan is linked to N295. A disulfide bond links C331 and C379. Fibronectin type-III domains follow at residues 410-504 (APRD…TQPE), 510-600 (PAPN…TLSD), 605-700 (APQN…TFES), 710-800 (VPSS…RPHT), 825-924 (PPVG…LVPT), and 926-1023 (PPKD…TPKA). N439 and N458 each carry an N-linked (GlcNAc...) asparagine glycan. Residues N608 and N684 are each glycosylated (N-linked (GlcNAc...) asparagine). N878 is a glycosylation site (N-linked (GlcNAc...) asparagine). The interval 1010–1066 (GPMSEAVQFRTPKADSSDKMPNDQALGSAGKGGRLPDLGSDYKPPMSGSNSPHGSPT) is disordered. The span at 1021 to 1030 (PKADSSDKMP) shows a compositional bias: basic and acidic residues. The span at 1056–1066 (SGSNSPHGSPT) shows a compositional bias: polar residues. Residues 1075–1095 (LVIIVSIGVITIVVVVIIAVF) traverse the membrane as a helical segment. Residues 1096–1377 (CTRRTTSHQK…MKDLNAITTA (282 aa)) are Cytoplasmic-facing. Residues 1143-1281 (PIDKSPDPNP…SHPLKSFAVP (139 aa)) form a disordered region. Phosphoserine is present on residues S1147 and S1163. Composition is skewed to polar residues over residues 1160-1176 (PRNS…MDSN), 1213-1238 (QPPQ…TCCT), and 1246-1265 (ATSS…QSLP). T1167 bears the Phosphothreonine mark. Residue S1317 is modified to Phosphoserine. T1320 bears the Phosphothreonine mark. Phosphoserine occurs at positions 1348, 1350, and 1351.

This sequence belongs to the immunoglobulin superfamily. DCC family. Interacts with MYO10. Interacts with RGMA and RGMB. Interacts with BMP2, BMP4, BMP6, and BMP7.

It is found in the cell membrane. In terms of biological role, multi-functional cell surface receptor regulating cell adhesion in many diverse developmental processes, including neural tube and mammary gland formation, myogenesis and angiogenesis. Receptor for members of the BMP, netrin, and repulsive guidance molecule (RGM) families. Netrin-Neogenin interactions result in a chemoattractive axon guidance response and cell-cell adhesion, the interaction between NEO1/Neogenin and RGMa and RGMb induces a chemorepulsive response. The chain is Neogenin (Neo1) from Rattus norvegicus (Rat).